We begin with the raw amino-acid sequence, 322 residues long: tRNA U34 carboxymethyltransferase (322 aa).

Residues Lys92, Trp106, Lys111, Gly131, 153-155, 181-182, Met196, Tyr200, and Arg315 each bind carboxy-S-adenosyl-L-methionine; these read DPT and VE.

This sequence belongs to the class I-like SAM-binding methyltransferase superfamily. CmoB family. Homotetramer.

It catalyses the reaction carboxy-S-adenosyl-L-methionine + 5-hydroxyuridine(34) in tRNA = 5-carboxymethoxyuridine(34) in tRNA + S-adenosyl-L-homocysteine + H(+). Its function is as follows. Catalyzes carboxymethyl transfer from carboxy-S-adenosyl-L-methionine (Cx-SAM) to 5-hydroxyuridine (ho5U) to form 5-carboxymethoxyuridine (cmo5U) at position 34 in tRNAs. The protein is tRNA U34 carboxymethyltransferase of Colwellia psychrerythraea (strain 34H / ATCC BAA-681) (Vibrio psychroerythus).